Reading from the N-terminus, the 299-residue chain is Urease accessory protein UreD (299 aa).

This sequence belongs to the UreD family. In terms of assembly, ureD, UreF and UreG form a complex that acts as a GTP-hydrolysis-dependent molecular chaperone, activating the urease apoprotein by helping to assemble the nickel containing metallocenter of UreC. The UreE protein probably delivers the nickel.

The protein resides in the cytoplasm. Required for maturation of urease via the functional incorporation of the urease nickel metallocenter. This chain is Urease accessory protein UreD, found in Natronomonas pharaonis (strain ATCC 35678 / DSM 2160 / CIP 103997 / JCM 8858 / NBRC 14720 / NCIMB 2260 / Gabara) (Halobacterium pharaonis).